The following is a 199-amino-acid chain: Inosine triphosphate pyrophosphatase (199 aa).

12-17 (TGNAKK) is an ITP binding site. Glu-42 is a binding site for Mg(2+). ITP is bound by residues Lys-54, 70 to 71 (DT), Lys-87, 146 to 149 (FGWD), Lys-169, and 174 to 175 (HR).

The protein belongs to the HAM1 NTPase family. As to quaternary structure, homodimer. Mg(2+) serves as cofactor. Requires Mn(2+) as cofactor.

It localises to the cytoplasm. The enzyme catalyses ITP + H2O = IMP + diphosphate + H(+). It carries out the reaction dITP + H2O = dIMP + diphosphate + H(+). The catalysed reaction is XTP + H2O = XMP + diphosphate + H(+). In terms of biological role, pyrophosphatase that hydrolyzes non-canonical purine nucleotides such as inosine triphosphate (ITP), deoxyinosine triphosphate (dITP) or xanthosine 5'-triphosphate (XTP) to their respective monophosphate derivatives. The enzyme does not distinguish between the deoxy- and ribose forms. Probably excludes non-canonical purines from RNA and DNA precursor pools, thus preventing their incorporation into RNA and DNA and avoiding chromosomal lesions. The chain is Inosine triphosphate pyrophosphatase from Monosiga brevicollis (Choanoflagellate).